Here is a 311-residue protein sequence, read N- to C-terminus: Aspartate carbamoyltransferase catalytic subunit (311 aa).

Residues arginine 58 and threonine 59 each contribute to the carbamoyl phosphate site. Residue lysine 86 participates in L-aspartate binding. Arginine 108, histidine 136, and glutamine 139 together coordinate carbamoyl phosphate. L-aspartate contacts are provided by arginine 169 and arginine 223. Glycine 264 and proline 265 together coordinate carbamoyl phosphate.

It belongs to the aspartate/ornithine carbamoyltransferase superfamily. ATCase family. Heterododecamer (2C3:3R2) of six catalytic PyrB chains organized as two trimers (C3), and six regulatory PyrI chains organized as three dimers (R2).

The catalysed reaction is carbamoyl phosphate + L-aspartate = N-carbamoyl-L-aspartate + phosphate + H(+). It functions in the pathway pyrimidine metabolism; UMP biosynthesis via de novo pathway; (S)-dihydroorotate from bicarbonate: step 2/3. Its function is as follows. Catalyzes the condensation of carbamoyl phosphate and aspartate to form carbamoyl aspartate and inorganic phosphate, the committed step in the de novo pyrimidine nucleotide biosynthesis pathway. The sequence is that of Aspartate carbamoyltransferase catalytic subunit from Acidiphilium cryptum (strain JF-5).